Reading from the N-terminus, the 701-residue chain is F-box/LRR-repeat protein 17 (701 aa).

Basic and acidic residues predominate over residues 1–11; the sequence is MGHLLSKEPRN. Disordered stretches follow at residues 1–20, 72–94, and 227–300; these read MGHL…RPRC, APAG…YAAA, and GGGG…DADC. Over residues 227–237 the composition is skewed to gly residues; the sequence is GGGGGPAGGGA. Pro residues predominate over residues 252–264; sequence EQPPQPLCPPPSS. An F-box domain is found at 318–365; the sequence is TPDINQLPPSILLKIFSNLSLDERCLSASLVCKYWRDLCLDFQFWKQL.

Belongs to the FBXL17 family. Part of the SCF (SKP1-CUL1-F-box) E3 ubiquitin-protein ligase complex SCF(FBXL17) composed of CUL1, SKP1, RBX1 and FBXL17. Interacts with BTB domain-containing proteins such as KLHL12, BCL6 and BACH1; specifically recognizes and binds a conserved degron of non-consecutive residues present at the interface of BTB dimers of aberrant composition. Interacts with SUFU. Interacts with PRMT1.

The protein localises to the cytoplasm. It is found in the nucleus. In terms of biological role, substrate-recognition component of the SCF(FBXL17) E3 ubiquitin ligase complex, a key component of a quality control pathway required to ensure functional dimerization of BTB domain-containing proteins (dimerization quality control, DQC). FBXL17 specifically recognizes and binds a conserved degron of non-consecutive residues present at the interface of BTB dimers of aberrant composition: aberrant BTB dimer are then ubiquitinated by the SCF(FBXL17) complex and degraded by the proteasome. The ability of the SCF(FBXL17) complex to eliminate compromised BTB dimers is required for the differentiation and survival of neural crest and neuronal cells. The SCF(FBXL17) complex mediates ubiquitination and degradation of BACH1. The SCF(FBXL17) complex is also involved in the regulation of the hedgehog/smoothened (Hh) signaling pathway by mediating the ubiquitination and degradation of SUFU, allowing the release of GLI1 from SUFU for proper Hh signal transduction. The SCF(FBXL17) complex mediates ubiquitination and degradation of PRMT1. The sequence is that of F-box/LRR-repeat protein 17 from Homo sapiens (Human).